Reading from the N-terminus, the 115-residue chain is Probable mycobacterial cidal antitoxin Rv3188 (115 aa).

This sequence belongs to the MbcA/ParS/Xre antitoxin family. As to quaternary structure, forms a heterotetramer with cognate toxin Rv3189.

Functionally, probable antitoxin component of a type II toxin-antitoxin (TA) system. Neutralizes the activity of cognate toxin Rv3189 by blocking access to the toxin active site. The chain is Probable mycobacterial cidal antitoxin Rv3188 from Mycobacterium tuberculosis (strain ATCC 25618 / H37Rv).